The chain runs to 258 residues: Pro-thyrotropin-releasing hormone-A (258 aa).

An N-terminal signal peptide occupies residues methionine 1 to glycine 22. The residue at position 78 (glutamine 78) is a Pyrrolidone carboxylic acid. Proline 80 carries the proline amide modification. Basic and acidic residues-rich tracts occupy residues tyrosine 84 to glutamate 98 and glutamate 107 to aspartate 119. Residues tyrosine 84–phenylalanine 124 form a disordered region. Pyrrolidone carboxylic acid is present on glutamine 92. Position 94 is a proline amide (proline 94). Position 112 is a pyrrolidone carboxylic acid (glutamine 112). Proline 114 bears the Proline amide mark. Glutamine 131 bears the Pyrrolidone carboxylic acid mark. Proline 133 carries the post-translational modification Proline amide. Residue glutamine 156 is modified to Pyrrolidone carboxylic acid. Proline 158 bears the Proline amide mark. Disordered stretches follow at residues tyrosine 166–valine 215 and serine 236–glutamate 258. Pyrrolidone carboxylic acid is present on glutamine 170. At proline 172 the chain carries Proline amide. Residues glycine 184 to glutamine 193 are compositionally biased toward basic and acidic residues. Glutamine 193 bears the Pyrrolidone carboxylic acid mark. Proline 195 is subject to Proline amide. Residue glutamine 242 is modified to Pyrrolidone carboxylic acid. The residue at position 244 (proline 244) is a Proline amide.

This sequence belongs to the TRH family.

It is found in the secreted. Its function is as follows. Functions as a regulator of the biosynthesis of TSH in the anterior pituitary gland and as a neurotransmitter/ neuromodulator in the central and peripheral nervous systems. This chain is Pro-thyrotropin-releasing hormone-A (trha), found in Oncorhynchus nerka (Sockeye salmon).